Reading from the N-terminus, the 367-residue chain is Regulator of fusion ref-1 (367 aa).

Pro residues predominate over residues 1-10 (MVLISTPPPA). Residues 1–24 (MVLISTPPPAYAHNRKTSQEKKRR) form a disordered region. Residues 11–24 (YAHNRKTSQEKKRR) form a basic motif 1 region. Residues 11 to 63 (YAHNRKTSQEKKRRDEINAKIKELQLLIQNESDNEKMTQGDVLNRAVEVVSRM) enclose the bHLH 1 domain. Residues 25–63 (DEINAKIKELQLLIQNESDNEKMTQGDVLNRAVEVVSRM) form a helix-loop-helix motif 1 region. Disordered stretches follow at residues 133–177 (RSES…RRDR) and 313–367 (ATSP…RPWE). Positions 141 to 157 (SSMSYRSQSSSPSTSES) are enriched in low complexity. Residues 161–177 (IDRKEVKKNREQDRRDR) are compositionally biased toward basic and acidic residues. The segment at 162–175 (DRKEVKKNREQDRR) is basic motif 2. One can recognise a bHLH 2 domain in the interval 162-219 (DRKEVKKNREQDRRDRQGEAFDALKNFIIENKLMTSHQVEKMQRLNTLDIIIAYIQNK). A helix-loop-helix motif 2 region spans residues 176 to 219 (DRQGEAFDALKNFIIENKLMTSHQVEKMQRLNTLDIIIAYIQNK). The segment covering 313 to 354 (ATSPKSQQSPSYSLDSPPPSSDTSSSSIETPSTPNENSNSNP) has biased composition (low complexity). Over residues 356–367 (ASRKSKLFRPWE) the composition is skewed to basic residues.

As to quaternary structure, interacts with unc-37.

It localises to the nucleus. Functionally, probable transcription factor. Binds 5'-TGCCACGTGTCCA-3' in vitro, probably via the E-box motif 5'-CA[TC][AG]TG-3'. Acts in embryonic development in a Notch-dependent manner, perhaps as a direct target of transcriptional regulator lag-1 in the Notch signaling pathway. Also acts in embryonic development in a Notch-independent manner. Plays a role in both Notch-dependent and -independent pathways in the execution of neuronal lineage decisions in the embryo. Also involved in regulating cell fate leading to formation of neuronal structures known as postdeirids. Involved in the pattern of cell fusion with a large syncytium known as hyp-7, during larval development, in hermaphrodites. Plays a role in regulating the activity of homeobox protein mab-5 in Pn.p cells. This Caenorhabditis elegans protein is Regulator of fusion ref-1.